Reading from the N-terminus, the 264-residue chain is Probable DNA polymerase sliding clamp 2 (264 aa).

A DNA-binding region spans residues 75 to 94 (SIAQEATVGIKISNFVRILD).

It belongs to the PCNA family.

Its function is as follows. Sliding clamp subunit. Responsible for tethering the catalytic subunit of DNA polymerase to DNA during high-speed replication. The protein is Probable DNA polymerase sliding clamp 2 of Paramecium bursaria Chlorella virus 1 (PBCV-1).